Consider the following 292-residue polypeptide: HTH-type transcriptional regulator BlaA (292 aa).

Residues 5–62 enclose the HTH lysR-type domain; it reads LPLNALRAFEASARHLNFTKAALELYVTQGAVSQQVRMLEERLGVILFKRLPRGLEMT. Residues 22–41 constitute a DNA-binding region (H-T-H motif); the sequence is FTKAALELYVTQGAVSQQVR.

This sequence belongs to the LysR transcriptional regulatory family.

Functionally, positive regulator of the expression of the gene (blaB) for beta-lactamase. The chain is HTH-type transcriptional regulator BlaA (blaA) from Proteus vulgaris.